The sequence spans 718 residues: Catalase (718 aa).

Residues His103 and Asn176 contribute to the active site. Position 390 (Tyr390) interacts with heme.

The protein belongs to the catalase family. Requires heme as cofactor.

It localises to the peroxisome matrix. The catalysed reaction is 2 H2O2 = O2 + 2 H2O. Functionally, catalyzes the degradation of hydrogen peroxide (H(2)O(2)) generated by peroxisomal oxidases to water and oxygen, thereby protecting cells from the toxic effects of hydrogen peroxide. This chain is Catalase (CAT1), found in Blumeria hordei (Barley powdery mildew).